The primary structure comprises 99 residues: Microcin E492 (99 aa).

An N-terminal signal peptide occupies residues 1–15 (MREISQKDLNLAFGA). The disordered stretch occupies residues 80-99 (SWNGSGSGYNSATSSSGSGS). Positions 87–99 (GYNSATSSSGSGS) are enriched in low complexity. Ser99 bears the Serine microcin E492 siderophore ester mark.

It belongs to the class IIa microcin family. In terms of assembly, multimer. Possibly forms a homodimer or a homotrimer. The C-terminal Ser is modified by attachment to a siderophore similar to enterobactin, which can bind one atom of iron. The modification consists of an ester linkage of the serine carboxyl to O6 of a glucose which is linked by a C-glycosidic bond to the 5'-benzoyl of a linear triester of N-(2,3-dihydroxybenzoyl)serine. Presence of the siderophore ester increases the antibacterial activity of the protein.

Functionally, channel-forming bacteriocin. Forms cation-selective channels. Active on enterobacteria, with highest activity against E.coli. Not active on other Gram-negative bacteria, Gram-positive bacteria or fungi. The unmodified protein is active against E.coli and S.enteritidis. When the siderophore ester is present at Ser-99, antibacterial activity against these species is increased and activity is also detected against E.cloacae and K.pneumoniae. Neutralized by its immunity protein MceB. This chain is Microcin E492, found in Klebsiella pneumoniae.